A 352-amino-acid chain; its full sequence is Glycerol-1-phosphate dehydrogenase [NAD(P)+] (352 aa).

Residues 99–103 (GTKID) and 121–124 (TSPS) each bind NAD(+). Substrate is bound at residue aspartate 126. Serine 130 contacts NAD(+). Aspartate 173 lines the substrate pocket. Zn(2+)-binding residues include aspartate 173 and histidine 253. Residue histidine 257 participates in substrate binding. Histidine 269 lines the Zn(2+) pocket.

This sequence belongs to the glycerol-1-phosphate dehydrogenase family. Zn(2+) serves as cofactor.

The protein resides in the cytoplasm. It catalyses the reaction sn-glycerol 1-phosphate + NAD(+) = dihydroxyacetone phosphate + NADH + H(+). The catalysed reaction is sn-glycerol 1-phosphate + NADP(+) = dihydroxyacetone phosphate + NADPH + H(+). It functions in the pathway membrane lipid metabolism; glycerophospholipid metabolism. In terms of biological role, catalyzes the NAD(P)H-dependent reduction of dihydroxyacetonephosphate (DHAP or glycerone phosphate) to glycerol 1-phosphate (G1P). The G1P thus generated is used as the glycerophosphate backbone of phospholipids in the cellular membranes of Archaea. The polypeptide is Glycerol-1-phosphate dehydrogenase [NAD(P)+] (Thermoplasma volcanium (strain ATCC 51530 / DSM 4299 / JCM 9571 / NBRC 15438 / GSS1)).